A 251-amino-acid polypeptide reads, in one-letter code: Triosephosphate isomerase (251 aa).

9–11 (NWK) contributes to the substrate binding site. His-95 serves as the catalytic Electrophile. Glu-167 (proton acceptor) is an active-site residue. Residues Gly-173, Ser-213, and 234–235 (GG) each bind substrate.

The protein belongs to the triosephosphate isomerase family. Homodimer.

The protein resides in the cytoplasm. It catalyses the reaction D-glyceraldehyde 3-phosphate = dihydroxyacetone phosphate. The protein operates within carbohydrate biosynthesis; gluconeogenesis. It participates in carbohydrate degradation; glycolysis; D-glyceraldehyde 3-phosphate from glycerone phosphate: step 1/1. Involved in the gluconeogenesis. Catalyzes stereospecifically the conversion of dihydroxyacetone phosphate (DHAP) to D-glyceraldehyde-3-phosphate (G3P). This is Triosephosphate isomerase from Pelobacter propionicus (strain DSM 2379 / NBRC 103807 / OttBd1).